The sequence spans 235 residues: Uridylate kinase (235 aa).

An ATP-binding site is contributed by 9-12 (KLSG). UMP is bound at residue Gly51. Residues Gly52 and Arg56 each coordinate ATP. UMP-binding positions include Asp71 and 132–139 (TGNPYFTT). Residues Thr159, Tyr165, and Asp168 each coordinate ATP.

Belongs to the UMP kinase family. Homohexamer.

It is found in the cytoplasm. The enzyme catalyses UMP + ATP = UDP + ADP. Its pathway is pyrimidine metabolism; CTP biosynthesis via de novo pathway; UDP from UMP (UMPK route): step 1/1. Its activity is regulated as follows. Inhibited by UTP. In terms of biological role, catalyzes the reversible phosphorylation of UMP to UDP. This Flavobacterium psychrophilum (strain ATCC 49511 / DSM 21280 / CIP 103535 / JIP02/86) protein is Uridylate kinase.